An 876-amino-acid polypeptide reads, in one-letter code: Alanine--tRNA ligase (876 aa).

The interval 2–461 (SKSTAEIRQA…VDSASEFKGY (460 aa)) is catalytic. Lys-74 carries the post-translational modification N6-acetyllysine. The editing stretch occupies residues 553-705 (DEARRARIRL…EAVTGEGAIA (153 aa)). Zn(2+) contacts are provided by His-564, His-568, Cys-666, and His-670. The segment at 699-808 (TGEGAIATVH…STIIVLATVV (110 aa)) is important for oligomerization. Residues 766–875 (IDVNGVKLLV…SVKGWVSAKL (110 aa)) are C-Ala domain.

This sequence belongs to the class-II aminoacyl-tRNA synthetase family. As to quaternary structure, homotetramer. The cofactor is Zn(2+).

The protein localises to the cytoplasm. The catalysed reaction is tRNA(Ala) + L-alanine + ATP = L-alanyl-tRNA(Ala) + AMP + diphosphate. It carries out the reaction (S)-lactate + ATP + H(+) = (S)-lactoyl-AMP + diphosphate. The enzyme catalyses (S)-lactoyl-AMP + L-lysyl-[protein] = N(6)-[(S)-lactoyl]-L-lysyl-[protein] + AMP + 2 H(+). Acetylation at Lys-74 decreases the alanylation activity for tRNA(Ala); a protein that is fully acetylated is inactive in vitro. Catalyzes the attachment of L-alanine to tRNA(Ala) in a two-step reaction: L-alanine is first activated by ATP to form Ala-AMP and then transferred to the acceptor end of tRNA(Ala). AlaRS also incorrectly activates the sterically smaller amino acid glycine as well as the sterically larger amino acid L-serine; generates 2-fold more mischarged Gly than Ser. These mischarged amino acids occur because the of inherent physicochemical limitations on discrimination between closely related amino acids (Ala, Gly and Ser) in the charging step. In presence of high levels of lactate, also acts as a protein lactyltransferase that mediates lactylation of lysine residues in target proteins. Functionally, edits mischarged Ser-tRNA(Ala) and Gly-tRNA(Ala) but not incorrectly charged Ser-tRNA(Thr). Dtd edits Gly-tRNA(Ala) 4-fold better than does AlaRS. In terms of biological role, attaches Ala to transfer-messenger RNA (tmRNA, also known as 10Sa RNA, the product of the ssrA gene). tmRNA plays a major role in rescue of stalled ribosomes via trans-translation. This chain is Alanine--tRNA ligase (alaS), found in Escherichia coli (strain K12).